The following is a 653-amino-acid chain: Mannosyl-oligosaccharide 1,2-alpha-mannosidase IA (653 aa).

Residues 1 to 41 (MPVGGLLPLFSSPAGGVLGGGLGGGGGRKGSGPAALRLTEK) lie on the Cytoplasmic side of the membrane. A helical; Signal-anchor for type II membrane protein membrane pass occupies residues 42–62 (FVLLLVFSAFITLCFGAIFFL). At 63–653 (PDSSKLLSGV…DKKEVEIREE (591 aa)) the chain is on the lumenal side. Residues 81 to 116 (QPAADHKPGPGARAEDAAEGRARRREEGAPGDPEAA) are disordered. A compositionally biased stretch (basic and acidic residues) spans 84–108 (ADHKPGPGARAEDAAEGRARRREEG). The cysteines at positions 476 and 508 are disulfide-linked. The N-linked (GlcNAc...) asparagine glycan is linked to Asn513. The Proton donor role is filled by Glu522.

The protein belongs to the glycosyl hydrolase 47 family. Requires Ca(2+) as cofactor.

It is found in the golgi apparatus membrane. It carries out the reaction N(4)-(alpha-D-Man-(1-&gt;2)-alpha-D-Man-(1-&gt;2)-alpha-D-Man-(1-&gt;3)-[alpha-D-Man-(1-&gt;2)-alpha-D-Man-(1-&gt;3)-[alpha-D-Man-(1-&gt;2)-alpha-D-Man-(1-&gt;6)]-alpha-D-Man-(1-&gt;6)]-beta-D-Man-(1-&gt;4)-beta-D-GlcNAc-(1-&gt;4)-beta-D-GlcNAc)-L-asparaginyl-[protein] (N-glucan mannose isomer 9A1,2,3B1,2,3) + 4 H2O = N(4)-(alpha-D-Man-(1-&gt;3)-[alpha-D-Man-(1-&gt;3)-[alpha-D-Man-(1-&gt;6)]-alpha-D-Man-(1-&gt;6)]-beta-D-Man-(1-&gt;4)-beta-D-GlcNAc-(1-&gt;4)-beta-D-GlcNAc)-L-asparaginyl-[protein] (N-glucan mannose isomer 5A1,2) + 4 beta-D-mannose. It catalyses the reaction N(4)-(alpha-D-Man-(1-&gt;2)-alpha-D-Man-(1-&gt;2)-alpha-D-Man-(1-&gt;3)-[alpha-D-Man-(1-&gt;3)-[alpha-D-Man-(1-&gt;2)-alpha-D-Man-(1-&gt;6)]-alpha-D-Man-(1-&gt;6)]-beta-D-Man-(1-&gt;4)-beta-D-GlcNAc-(1-&gt;4)-beta-D-GlcNAc)-L-asparaginyl-[protein] (N-glucan mannose isomer 8A1,2,3B1,3) + 3 H2O = N(4)-(alpha-D-Man-(1-&gt;3)-[alpha-D-Man-(1-&gt;3)-[alpha-D-Man-(1-&gt;6)]-alpha-D-Man-(1-&gt;6)]-beta-D-Man-(1-&gt;4)-beta-D-GlcNAc-(1-&gt;4)-beta-D-GlcNAc)-L-asparaginyl-[protein] (N-glucan mannose isomer 5A1,2) + 3 beta-D-mannose. Its pathway is protein modification; protein glycosylation. With respect to regulation, inhibited by both 1-deoxymannojirimycin and kifunensine. Functionally, involved in the maturation of Asn-linked oligosaccharides. Progressively trim alpha-1,2-linked mannose residues from Man(9)GlcNAc(2) to produce Man(5)GlcNAc(2). The polypeptide is Mannosyl-oligosaccharide 1,2-alpha-mannosidase IA (MAN1A1) (Homo sapiens (Human)).